A 228-amino-acid chain; its full sequence is Heat shock 70-related protein 4 (228 aa).

The interval 57–80 is disordered; it reads RWHEPPGNTVFDEAHDRPQVRRPD. Basic and acidic residues predominate over residues 68–80; that stretch reads DEAHDRPQVRRPD.

The protein belongs to the heat shock protein 70 family.

The polypeptide is Heat shock 70-related protein 4 (HSP70.4) (Leishmania major).